A 524-amino-acid polypeptide reads, in one-letter code: Bifunctional purine biosynthesis protein PurH (524 aa).

Residues 1 to 145 (MIKQALLSVS…KNHRDVTVIV (145 aa)) form the MGS-like domain.

This sequence belongs to the PurH family.

The enzyme catalyses (6R)-10-formyltetrahydrofolate + 5-amino-1-(5-phospho-beta-D-ribosyl)imidazole-4-carboxamide = 5-formamido-1-(5-phospho-D-ribosyl)imidazole-4-carboxamide + (6S)-5,6,7,8-tetrahydrofolate. The catalysed reaction is IMP + H2O = 5-formamido-1-(5-phospho-D-ribosyl)imidazole-4-carboxamide. It participates in purine metabolism; IMP biosynthesis via de novo pathway; 5-formamido-1-(5-phospho-D-ribosyl)imidazole-4-carboxamide from 5-amino-1-(5-phospho-D-ribosyl)imidazole-4-carboxamide (10-formyl THF route): step 1/1. It functions in the pathway purine metabolism; IMP biosynthesis via de novo pathway; IMP from 5-formamido-1-(5-phospho-D-ribosyl)imidazole-4-carboxamide: step 1/1. This is Bifunctional purine biosynthesis protein PurH from Cupriavidus taiwanensis (strain DSM 17343 / BCRC 17206 / CCUG 44338 / CIP 107171 / LMG 19424 / R1) (Ralstonia taiwanensis (strain LMG 19424)).